The following is a 73-amino-acid chain: UPF0235 protein LA_1736 (73 aa).

The protein belongs to the UPF0235 family.

In Leptospira interrogans serogroup Icterohaemorrhagiae serovar Lai (strain 56601), this protein is UPF0235 protein LA_1736.